Consider the following 294-residue polypeptide: S-adenosylmethionine uptake transporter (294 aa).

10 helical membrane-spanning segments follow: residues Ala-4–Ile-24, Val-41–Gly-61, Val-74–Leu-91, Thr-98–Leu-118, Asn-121–Leu-141, Phe-148–Ile-168, Met-178–Met-198, Phe-207–Leu-227, Ala-237–Phe-257, and Phe-260–Ile-280. EamA domains follow at residues Ser-22–Leu-141 and Ile-160–Ile-280.

Belongs to the drug/metabolite transporter (DMT) superfamily. 10 TMS drug/metabolite exporter (DME) (TC 2.A.7.3) family.

It is found in the cell inner membrane. Its activity is regulated as follows. Transport is inhibited by S-adenosylethionine and to a lesser extent by S-adenosylhomocysteine. Unlike eukaryotic transporters is not inhibited by sinfungin. Also inhibited by 2.4-dinitrophenol, suggesting transport is an energy-dependent process. Functionally, transports S-adenosylmethionine. This chain is S-adenosylmethionine uptake transporter (sam), found in Rickettsia prowazekii (strain Madrid E).